The primary structure comprises 103 residues: Small ribosomal subunit protein uS10 (103 aa).

It belongs to the universal ribosomal protein uS10 family. In terms of assembly, part of the 30S ribosomal subunit.

Its function is as follows. Involved in the binding of tRNA to the ribosomes. This Campylobacter jejuni subsp. jejuni serotype O:6 (strain 81116 / NCTC 11828) protein is Small ribosomal subunit protein uS10.